Reading from the N-terminus, the 227-residue chain is Uracil-DNA glycosylase (227 aa).

Residue D68 is the Proton acceptor of the active site.

It belongs to the uracil-DNA glycosylase (UDG) superfamily. UNG family.

It localises to the cytoplasm. It carries out the reaction Hydrolyzes single-stranded DNA or mismatched double-stranded DNA and polynucleotides, releasing free uracil.. Functionally, excises uracil residues from the DNA which can arise as a result of misincorporation of dUMP residues by DNA polymerase or due to deamination of cytosine. The polypeptide is Uracil-DNA glycosylase (Mycobacterium avium (strain 104)).